We begin with the raw amino-acid sequence, 679 residues long: Kelch-like protein diablo (679 aa).

Positions 1 to 48 (MGDLPGGGGGAAGGAGAAGGGGGGGNGAAGSSSSGGGASGSGGGGPGS) are enriched in gly residues. A disordered region spans residues 1–84 (MGDLPGGGGG…RLSHTSEKHP (84 aa)). The 68-residue stretch at 101 to 168 (CDVVLNVGGR…CYTAHIIVEE (68 aa)) folds into the BTB domain. The BACK domain occupies 203-305 (CLGIRAFADT…SPKFLVGTVG (103 aa)). Kelch repeat units lie at residues 352–398 (VLFA…VLND), 400–446 (LYAV…VLDG), 447–493 (FLYA…VLGG), 495–540 (LYAI…VFNN), 542–587 (IYAV…VVNG), and 588–634 (QLYA…VMRA). Positions 643 to 679 (CDNNSSNNNNNNYNLKHQQQQPQQQQQQQQQQTQQQL) are disordered. Residues 645 to 679 (NNSSNNNNNNYNLKHQQQQPQQQQQQQQQQTQQQL) are compositionally biased toward low complexity.

The protein operates within protein modification; protein ubiquitination. Its function is as follows. Probable substrate-specific adapter of an E3 ubiquitin-protein ligase complex which mediates the ubiquitination and subsequent proteasomal degradation of target proteins. May have a role in synapse differentiation and growth. The protein is Kelch-like protein diablo of Drosophila willistoni (Fruit fly).